A 254-amino-acid polypeptide reads, in one-letter code: UPF0246 protein FTM_0239 (254 aa).

It belongs to the UPF0246 family.

The protein is UPF0246 protein FTM_0239 of Francisella tularensis subsp. mediasiatica (strain FSC147).